Here is a 348-residue protein sequence, read N- to C-terminus: Farnesoic acid carboxyl-O-methyltransferase (348 aa).

Tyr16 provides a ligand contact to S-adenosyl-L-methionine. Residues Tyr16 and 19–23 (HSKYQ) contribute to the substrate site. S-adenosyl-L-methionine is bound by residues Gly57, 57-58 (GC), Asn63, 94-97 (FNDS), 123-125 (SFF), and 140-142 (SYS). Residue 141 to 145 (YSLHF) participates in substrate binding. Residues Asn162, Asp247, and Phe249 each coordinate Mg(2+).

The protein belongs to the methyltransferase superfamily. SABATH family. Homodimer. Mg(2+) serves as cofactor. In terms of tissue distribution, mostly expressed in leaves and, at very low levels, in roots, stems, flowers and siliques.

It carries out the reaction (2E,6E)-farnesoate + S-adenosyl-L-methionine = methyl (2E,6E)-farnesoate + S-adenosyl-L-homocysteine. The enzyme catalyses juvenile hormone III carboxylate + S-adenosyl-L-methionine = juvenile hormone III + S-adenosyl-L-homocysteine. Its pathway is sesquiterpene biosynthesis. Activated by Mn(2+) ions. Strongly inhibited by Cu(2+), Zn(2+), Fe(3+) and Fe(2+) ions. Moderately inhibited by Na(+) and Ca(2+) ions. Rapidly degraded at temperatures above 40 degrees Celsius. In terms of biological role, may catalyze the production of the insect juvenile hormone methyl farnesoate (MeFA) to trigger defense against insect herbivory. This is Farnesoic acid carboxyl-O-methyltransferase from Arabidopsis thaliana (Mouse-ear cress).